A 100-amino-acid chain; its full sequence is Phosphoribosyl-ATP pyrophosphatase (100 aa).

Belongs to the PRA-PH family.

It is found in the cytoplasm. The enzyme catalyses 1-(5-phospho-beta-D-ribosyl)-ATP + H2O = 1-(5-phospho-beta-D-ribosyl)-5'-AMP + diphosphate + H(+). The protein operates within amino-acid biosynthesis; L-histidine biosynthesis; L-histidine from 5-phospho-alpha-D-ribose 1-diphosphate: step 2/9. In Haloquadratum walsbyi (strain DSM 16790 / HBSQ001), this protein is Phosphoribosyl-ATP pyrophosphatase.